We begin with the raw amino-acid sequence, 77 residues long: Putative ankyrin repeat protein RC0956 (77 aa).

An ANK repeat occupies 8-38 (TDISPLMLASEYGQVTIVKYLLKHGNYNVKG).

This chain is Putative ankyrin repeat protein RC0956, found in Rickettsia conorii (strain ATCC VR-613 / Malish 7).